We begin with the raw amino-acid sequence, 217 residues long: Non-structural protein NS3 (217 aa).

It belongs to the orbivirus NS3 family.

Its function is as follows. May play a role in the release of virions from infected cells. The sequence is that of Non-structural protein NS3 (Segment-10) from African horse sickness virus (AHSV).